The following is a 252-amino-acid chain: PF03932 family protein CutC (252 aa).

The protein belongs to the CutC family.

The protein resides in the cytoplasm. The sequence is that of PF03932 family protein CutC from Sodalis glossinidius (strain morsitans).